Here is a 37-residue protein sequence, read N- to C-terminus: Large ribosomal subunit protein bL36 (37 aa).

It belongs to the bacterial ribosomal protein bL36 family.

The sequence is that of Large ribosomal subunit protein bL36 from Dehalococcoides mccartyi (strain ATCC BAA-2266 / KCTC 15142 / 195) (Dehalococcoides ethenogenes (strain 195)).